A 468-amino-acid chain; its full sequence is Acyltransferase R4 (468 aa).

7 helical membrane passes run 21–41, 70–90, 133–153, 252–272, 308–328, 388–408, and 423–443; these read GILS…LGYD, LFTI…CLFF, LNLL…TGFF, FLAA…PLFW, DPFG…YPTW, FAVY…LFSW, and IGFG…AAMF.

Belongs to the acyltransferase 3 family.

Its subcellular location is the membrane. Its pathway is secondary metabolite biosynthesis. Acyltransferase; part of the gene cluster that mediates the biosynthesis of squalestatin S1 (SQS1, also known as zaragozic acid A), a heavily oxidized fungal polyketide that offers potent cholesterol lowering activity by targeting squalene synthase (SS). SQS1 is composed of a 2,8-dioxobicyclic[3.2.1]octane-3,4,5-tricarboxyclic acid core that is connected to two lipophilic polyketide arms. These initial steps feature the priming of an unusual benzoic acid starter unit onto the highly reducing polyketide synthase pks2, followed by oxaloacetate extension and product release to generate a tricarboxylic acid containing product. The phenylalanine ammonia lyase (PAL) M7 and the acyl-CoA ligase M9 are involved in transforming phenylalanine into benzoyl-CoA. The citrate synthase-like protein R3 is involved in connecting the C-alpha-carbons of the hexaketide chain and oxaloacetate to afford the tricarboxylic acid unit. The potential hydrolytic enzymes, M8 and M10, are in close proximity to pks2 and may participate in product release. On the other side, the tetraketide arm is synthesized by a the squalestatin tetraketide synthase pks1 and enzymatically esterified to the core in the last biosynthetic step, by the acetyltransferase M4. The biosynthesis of the tetraketide must involve 3 rounds of chain extension. After the first and second rounds methyl-transfer occurs, and in all rounds of extension the ketoreductase and dehydratase are active. The enoyl reductase and C-MeT of pks1 are not active in the final round of extension. The acetyltransferase M4 appears to have a broad substrate selectivity for its acyl CoA substrate, allowing the in vitro synthesis of novel squalestatins. The biosynthesis of SQS1 requires several oxidative steps likely performed by oxidoreductases M1, R1 and R2. Finally, in support of the identification of the cluster as being responsible for SQS1 production, the cluster contains a gene encoding a putative squalene synthase (SS) R6, suggesting a likely mechanism for self-resistance. In Phoma sp. (strain ATCC 20986 / MF5453), this protein is Acyltransferase R4.